The chain runs to 673 residues: Probable urea active transporter 2 (673 aa).

Helical transmembrane passes span 8 to 28 (GYGY…MAII), 83 to 103 (IMGG…FLFL), 132 to 152 (VYLF…LLGG), 164 to 184 (TVAA…LGGL), 196 to 218 (VMIY…LIGS), 249 to 269 (MMYL…GDPG), 287 to 307 (LMGG…AGLA), 336 to 356 (IYGM…VMLF), 391 to 411 (QLVR…GALS), 424 to 446 (LLTF…LFWN), 451 to 471 (FSLV…WLAS), 492 to 512 (FVGN…LSYI), 559 to 579 (IGIN…ALLG), and 592 to 612 (LIIV…LFPL).

Belongs to the sodium:solute symporter (SSF) (TC 2.A.21) family.

The protein localises to the endoplasmic reticulum membrane. In terms of biological role, involved in active transport of urea. This Schizosaccharomyces pombe (strain 972 / ATCC 24843) (Fission yeast) protein is Probable urea active transporter 2 (dur3-2).